A 3838-amino-acid polypeptide reads, in one-letter code: MSGTFSRCMCTPAARVFWNAGQVFCTRCLSARPLLSPELQDTDLGVVGLFYKPKDKIHWKVPIGIPQVECTPSGCCWLSAVFPLARMTSGNHNFLQRLVKVADVLYRDGCLAPRHLRELQVYERGCSWYPITGPVPGMGLFANSMHVSDQPFPGATHVLTNSPLPQRACRQPFCPFEEAHSDVYRWKKFVIFTDSSPNGRFRMMWTPESDDSAALEVLPPELERQVEILTRSFPAHHPINLADWELTESPENGFSFGTSHSCGHIVQNPNVFDGKCWLTCFLGQSAEVCYHEEHLANALGYQTKWGVHGKYLQRRLQVRGMRAVVDPDGPIHVEALSCSQSWVRHLTLNNDVTPGFVRLTSIRIVSNTEPTAFRIFRFGAHKWYGAAGKRARAKRATKSGKDSALAPKIAPPVPTCGITTYSPPTDGSCGWHVLAAIVNRMINGDFTSPLPQYNRPEDDWASDYDLAQAIQCLQLPATVVRNRACPNAKYLIKLNGVHWEVEVRSGMAPRSLSRECVVGVCSEGCVAPPYPADGLPKRALEALASAYRLPSDCVSSGIADFLADPPPQEFWTLDKMLTSPSPERSGFSSLYKLLLEVVPQKCGATEGAFVYAVERMLKDCPSPEQAMALLAKIKVPSSKAPSVSLDECFPAGVPADFEPAFQERPRSPGAAVALCSPDAKGFEGTASEEAQESGHKAVHAVPLAEGPNNEQVQVVAGEQLELGGCGLAIGSAQSSSDSKRENMHNSREDEPLDLSHPAPAATTTLVGEQTPDNPGSDASALPIAVRGFVPTGPILRHVEHCGTESGDSSSPLDLSFAQTLDQPLDLSLAAWPVKATASDPGWVRGRCEPVFLKPRKAFSDGDSALQFGELSESSSVIEFDQTKDTLVADAPVDLTTSNEALSAVDPSEFVELRRPRHSAQALIDRGGPLADVHAKIKNRVYEQCLQACEPGSRATPATREWLDKMWDRVDMKTWRCTSQFQAGRILASLKFLPDMIQDTPPPVPRKNRASDNAGLKQLVARWDKKLSVTPPPKSAGLVLDQTVPPPTDIQQEDATPSDGLSHASDFSSRVSTSWSWKGLMLSGTRLAGSAGQRLMTWVFEVYSHLPAFILTLFSPRGSMAPGDWLFAGVVLLALLLCRSYPILGCLPLLGVFSGSLRRVRLGVFGSWMAFAVFLFSTPSNPVGSSCDHDSPECHAELLALEQRQLWEPVRGLVVGPSGLLCVILGKLLGGSRHLWHVILRLCMLTDLALSLVYVVSQGRCHKCWGKCIRTAPAEVALNVFPFSRATRNSLTSLCDRFQTPKGVDPVHLATGWRGCWRGESPIHQPHQKPIAYANLDEKKISAQTVVAVPYDPSQAIKCLKVLQAGGAIVDQPTPEVVRVSEIPFSAPFFPKVPVNPDCRIVVDSDTFVAAVRCGYSTAQLVLGRGNFAKLNQTPLRDSASTKTTGGASYTLAVAQVSVWTLVHFILGLWFTSPQVCGRGTADPWCSNPFSYPAYGPGVVCSSRLCVSADGVTLPLFSAVAQLSGREVGIFILVLVSLTALAHRLALKADMLVVFSAFCAYAWPMSSWLICFFPILLKWVTLHPLTMLWVHSFLVFCMPAAGILSLGITGLLWAVGRFTQVAGIITPYDIHQYTSGPRGAAAVATAPEGTYMAAVRRAALTGRTLIFTPSAVGSLLEGAFRTHKPCLNTVNVVGSSLGSGGVFTIDGRKTVVTAAHVLNGDTARVTGDSYNRMHTFKTSGDYAWSHADDWQGVAPVVKVAKGYRGRAYWQTSTGVEPGVIGEGFAFCFTNCGDSGSPVISESGDLIGIHTGSNKLGSGLVTTPEGETCAIKETKLSDLSRHFAGPSVPLGDIKLSPAIVPDVTSIPSDLASLLASVPVMEGGLSTVQLLCVFFLLWRMMGHAWTPIVAVGFFLLNEILPAVLVRAVFSFALFILAWATPWSAQVLMIRLLTASLNRNKLSLAFYALGGVVGLAAEIGAFAGRLPELSQALSTYCFLPRVLAMASYVPIIIIGGLHALGVILWLFKYRCLHNMLVGDGSFSSAFFLRYFAEGNLRKGVSQSCGMSNESLTAALACKLSQADLDFLSSLTNFKCFVSASNMKNAAGQYIEAAYAKALRQELASLVQVDKMKGILSKLEAFAETATPSLDAGDVVVLLGQHPHGSILDINVGTERKTVSVQETRSLGGSKFSVCTVVSNTPVDALTGIPLQTPTPLFENGPRHRGEEDDLRVERMKKHCVSLGFHNINGKVYCKIWDKSTGDTFYTDDSRYTQDLAFQDRSADYRDRDYEGVQTAPQQGFDPKSETPIGTVVIGGITYNRYLIKGKEVLVPKPDNCLEAAKLSLEQALAGMGQTCDLTAAEVEKLRRIISQLQGLTTEQALNCLLAASGLTRCGRGGLVVTETAVKIVKYHSRTFTLGPLDLKVTSEAEVKKSTEQGHAVVANLCSGVILMRPHPPSLVDVLLKPGLDTKPGIQPGHGAGNMGVDGSTWDFETAPTKAELELSKQIIQACEVRRGDAPNLQLPYKLYPVRGDPERHGGRLINTRFGDLSYKTPQDTKSAIHAACCLHPNGAPVSDGKSTLGTTLQHGFELYVPTVPYSVMEYLDSRPDTPFMCTKHGTSKAAAEDLQKYDLSTQGFVLPGVLRLVRRFIFGHIGKAPPLFLPSTYPAKNSMAGINGQRFPTKDVQSIPEIDEMCARAVKENWQTVTPCTLKKQYCSKPKTRTILGTNNFIALAHRSALSGVTQAFMKKAWKSPIALGKNKFKELHCTVAGRCLEADLASCDRSTPAIVRWFVANLLYELAGCEEYLPSYVLNCCHDLVATQDGAFTKRGGLSSGDPVTSVSNTVYSLIIYAQHMVLSALKMGHEIGLKFLEEQLKFEDLLEIQPMLVYSDDLVLYAERPTFPNYHWWVEHLDLMLGFRTDPKKTVITDKPSFLGCRIEAGRQLVPNRDRILAALAYHMKAQNASEYYASAAAILMDSCACIDHDPEWYEDLICGIARCARQDGYSFPGPAFFMSMWEKLRSHNEGKKFRHCGICDAKADHASACGLDLCLFHSHFHQHCPVTLSCGHHAGSRECSQCQSPVGAGRSPLDAVLKQIPYKPPRTVIMKVGNKTTALDPGRYQSRRGLVAVKRGIAGNEVDLPDGDYQVVPLLPTCKDINMVKVACNVLLSKFIVGPPGSGKTTWLLSQVQDDDVIYTPTHQTMFDIVSALKVCRYSIPGASGLPFPPPARSGPWVRLVASGHVPGRTSYLDEAGYCNHLDILRLLSKTPLVCLGDLQQLHPVGFDSYCYVFDQMPQKQLTTIYRFGPNICAAIQPCYREKLESKARNTRVVFTTWPVAFGQVLTPYHKDRIGSAITIDSSQGATFDIVTLHLPSPKSLNKSRALVAITRARHGLFIYDPHNQLQEFFNLIPERTDCNLVFSRGDDLVVLSADNAVTTVAKALGTGPSRFRVSDPRCKSLLAACSASLEGSCMPLPQVAHNLGFYFSPDSPAFAPLPKELAPHWPVVTHQNNRAWPDRLVASMRPIDARYSKPMVGAGYVVGPSTFLGTPGVVSYYLTLYIRGEPQALPETLVSTGRIATDCREYLDAAEEEAAKELPHAFIGDVKGTTVGGCHHITSKYLPRTLPKDSVAVVGVSSPGRAAKAMCTLTDVYLPELRPYLQPETASKCWKLKLDFRDVRLMVWKGATAYFQLEGLTWSALPDYARFIQLPKDAVVYIDPCIGPATANRKVVRTTDWRADLAVTPYDYGAQNILTTAWFEDLGPQWKILGLQPFRRAFGFENTEDWAILARRMSDGKDYTDYNWDCVRERPHAIYGRARDHTYHFAPGTELQVELGKPRLPPGREP.

The segment at 8-28 adopts a C4-type; atypical zinc-finger fold; it reads CMCTPAARVFWNAGQVFCTRC. Positions 69-180 constitute a Peptidase C31 domain; the sequence is ECTPSGCCWL…QPFCPFEEAH (112 aa). The tract at residues 69–182 is PCP1-alpha; it reads ECTPSGCCWL…FCPFEEAHSD (114 aa). Residues C76 and H146 each act as for Nsp1-alpha papain-like cysteine proteinase activity in the active site. Residues 203 to 204 are important for host EIF2AK2 inhibition; sequence MM. Residues 269-384 are PCP1-beta; it reads PNVFDGKCWL…IFRFGAHKWY (116 aa). The Peptidase C32 domain maps to 269-385; that stretch reads PNVFDGKCWL…FRFGAHKWYG (117 aa). Active-site for Nsp1-beta papain-like cysteine proteinase activity residues include C276 and H345. Positions 418 to 505 are OTU-like; sequence ITTYSPPTDG…GVHWEVEVRS (88 aa). The Peptidase C33 domain occupies 420-527; the sequence is TYSPPTDGSC…VGVCSEGCVA (108 aa). Catalysis depends on for Nsp2 cysteine proteinase activity residues C429 and H498. Disordered regions lie at residues 728–758 and 1027–1064; these read AIGS…SHPA and SVTP…SHAS. Basic and acidic residues predominate over residues 737-749; that stretch reads DSKRENMHNSRED. 5 helical membrane passes run 1094 to 1114, 1117 to 1137, 1162 to 1182, 1211 to 1231, and 1235 to 1255; these read LMTW…TLFS, GSMA…LLLC, GVFG…SNPV, GLVV…LGGS, and WHVI…VYVV. The HD1 stretch occupies residues 1132-1255; sequence LALLLCRSYP…DLALSLVYVV (124 aa). Positions 1310-1334 are WCCH; sequence TGWRGCWRGESPIHQPHQKPIAYAN. 4 helical membrane passes run 1450–1470, 1526–1546, 1556–1576, and 1592–1612; these read TLAV…GLWF, EVGI…RLAL, AFCA…PILL, and FLVF…GLLW. The tract at residues 1451 to 1612 is HD2; the sequence is LAVAQVSVWT…LSLGITGLLW (162 aa). Positions 1677 to 1879 constitute a Peptidase S32 domain; that stretch reads GAFRTHKPCL…SLLASVPVME (203 aa). Residues H1715, D1740, and S1793 each act as charge relay system; for 3C-like serine proteinase activity in the active site. The next 5 membrane-spanning stretches (helical) occupy residues 1875–1895, 1916–1936, 1960–1980, 2003–2023, and 2029–2048; these read VPVM…FLLW, ILPA…LAWA, LAFY…AFAG, SYVP…LWLF, and HNML…RYFA. Residues 1902 to 2023 are HD3; it reads WTPIVAVGFF…HALGVILWLF (122 aa). The region spanning 2364 to 2527 is the NiRAN domain; it reads IISQLQGLTT…LPYKLYPVRG (164 aa). One can recognise a RdRp catalytic domain in the interval 2765–2899; the sequence is AGRCLEADLA…LYAERPTFPN (135 aa). Residues 3021–3084 enclose the AV ZBD domain; that stretch reads GKKFRHCGIC…SPVGAGRSPL (64 aa). Zn(2+)-binding residues include C3027, C3030, C3040, C3045, H3048, H3050, H3052, H3054, C3061, H3063, C3070, and C3073. The (+)RNA virus helicase ATP-binding domain occupies 3134-3293; it reads DLPDGDYQVV…VFDQMPQKQL (160 aa). 3168-3175 contributes to the ATP binding site; that stretch reads VGPPGSGK. One can recognise a (+)RNA virus helicase C-terminal domain in the interval 3294 to 3423; sequence TTIYRFGPNI…FSRGDDLVVL (130 aa). The AV-Nsp11N/CoV-Nsp15M domain maps to 3462–3559; the sequence is EGSCMPLPQV…LTLYIRGEPQ (98 aa). Residues 3561–3683 enclose the NendoU domain; the sequence is LPETLVSTGR…MVWKGATAYF (123 aa). Catalysis depends on residues H3592, H3607, and K3636.

Belongs to the arteriviridae polyprotein family. In terms of assembly, nsp1-alpha papain-like: Interacts with host RNF31. Interacts with host EIF2AK2; this interaction occurs in host stress granules and leads to EIF2AK2 inhibition. Interacts with host G3BP1; this interaction probably plays a role in Nsp1-beta-mediated inhibition of host EIF2AK2. As to quaternary structure, interacts with host DDX18; this interaction redistributes host DDX18 to the cytoplasm. In terms of assembly, interacts with host IFITM1. Interacts with host DDX5. As to quaternary structure, interacts with host OTULIN. In terms of assembly, interacts with host LGALS3. Specific enzymatic cleavages in vivo by its own proteases yield mature proteins. Nsp1 is autocleaved into two subunits, Nsp1-alpha and Nsp1-beta. There are two alternative pathways for processing. Either nsp4-5 is cleaved, which represents the major pathway or the nsp5-6 and nsp6-7 are processed, which represents the minor pathway. The major pathway occurs when nsp2 acts as a cofactor for nsp4.

It is found in the host nucleus. Its subcellular location is the host cytoplasm. The protein resides in the host membrane. It localises to the host endoplasmic reticulum. The protein localises to the host perinuclear region. It carries out the reaction RNA(n) + a ribonucleoside 5'-triphosphate = RNA(n+1) + diphosphate. The catalysed reaction is ATP + H2O = ADP + phosphate + H(+). The enzyme catalyses Thiol-dependent hydrolysis of ester, thioester, amide, peptide and isopeptide bonds formed by the C-terminal Gly of ubiquitin (a 76-residue protein attached to proteins as an intracellular targeting signal).. It catalyses the reaction uridylyl-uridylyl-ribonucleotide-RNA = a 3'-end uridylyl-2',3'-cyclophospho-uridine-RNA + a 5'-end dephospho-ribonucleoside-RNA. In terms of biological role, contains the activities necessary for the transcription of negative stranded RNA, leader RNA, subgenomic mRNAs and progeny virion RNA as well as proteinases responsible for the cleavage of the polyprotein into functional products. Its function is as follows. Inhibits host IFN-beta production. Plays a role in the degradation of the host transcriptional activator CREBBP protein. The degradation of host CREBBP which is a key component of the IFN enhanceosome is likely responsible for the inhibition of interferon mediated by Nsp1-alpha. Also participates in the inhibition of host NF-kappa-B activation by counteracting LUBAC-dependent induction of NF-kappa-B. Reduces host NEMO ubiquitination by blocking the interaction between the two LUBAC complex components RNF31 and SHARPIN. Functionally, plays a role in blocking host mRNA nuclear export to the cytoplasm and subversion of host protein synthesis. Additionally, inhibits the interferon-activated JAK/STAT signal transduction by mediating the ubiquitination and subsequent proteasomal degradation of host KPNA1. Repurposes the host antiviral stress granules into a proviral platform to counteract the EIF2AK2/PKR restriction, thereby regulating the host inflammatory response. Multifunctional protein that acts as a viral protease and as a viral antagonist of host immune response. Cleaves the nsp2/nsp3 site in the viral polyprotein. Displays deubiquitinating activity that cleaves both ubiquitinated and ISGylated products and therefore inhibits ubiquitin and ISG15-dependent host innate immunity. Also deubiquinates host NFKBIA, thereby interfering with NFKBIA degradation and impairing subsequent NF-kappa-B activation. In terms of biological role, plays a role in the inhibition of the immune response by interacting with host IFITM1. This interaction leads to the proteasomal degradation of the IFN-induced antiviral protein IFITM1. Its function is as follows. Cleaves the majority of cleavage sites present in the C-terminus of the polyprotein. Triggers host apoptosis through caspase-3, -8, and -9 activations. Subverts host innate immune responses through its protease activity. Targets the NF-kappa-B essential modulator NEMO and mediates its cleavage. Blocks host interferon beta induction and downstream signaling by cleaving mitochondrial MAVS, dislodging it from the mitochondria. Impairs host defense by cleaving host mRNA-decapping enzyme DCP1A to attenuate its antiviral activity. Functionally, plays a role in the initial induction of autophagosomes from host endoplasmic reticulum. Plays a role in the inhibition of host STAT3 signaling pathway by inducing the degradation of STAT3. In terms of biological role, responsible for replication and transcription of the viral RNA genome. Its function is as follows. Displays RNA and DNA duplex-unwinding activities with 5' to 3' polarity. Functionally, plays a role in viral transcription/replication and prevents the simultaneous activation of host cell dsRNA sensors, such as MDA5/IFIH1, OAS, PKR and NLRP3 inflammasome. Acts by degrading the 5'-polyuridines generated during replication of the poly(A) region of viral genomic and subgenomic RNAs. Catalyzes a two-step reaction in which a 2'3'-cyclic phosphate (2'3'-cP) is first generated by 2'-O transesterification, which is then hydrolyzed to a 3'-phosphate (3'-P). If not degraded, poly(U) RNA would hybridize with poly(A) RNA tails and activate host dsRNA sensors. Also plays a role in the inhibition of host type I interferon production by recruiting host OTULIN to promote removal of linear ubiquitination targeting host NEMO. The sequence is that of Replicase polyprotein 1ab from Sus scrofa (Pig).